The sequence spans 263 residues: Ribonuclease HII (263 aa).

The RNase H type-2 domain maps to 71-262; that stretch reads QAIAGIDEVG…VKSMCCNSTN (192 aa). Residues Asp77, Glu78, and Asp172 each coordinate a divalent metal cation.

The protein belongs to the RNase HII family. Requires Mn(2+) as cofactor. Mg(2+) is required as a cofactor.

The protein resides in the cytoplasm. It catalyses the reaction Endonucleolytic cleavage to 5'-phosphomonoester.. Its function is as follows. Endonuclease that specifically degrades the RNA of RNA-DNA hybrids. This Streptococcus pyogenes serotype M2 (strain MGAS10270) protein is Ribonuclease HII.